The chain runs to 58 residues: Metallothionein (58 aa).

The beta stretch occupies residues 1-29 (MPDPCCIDKCECKEGGCKAGCKCTSCRCT). 18 residues coordinate a divalent metal cation: Cys5, Cys6, Cys10, Cys12, Cys17, Cys21, Cys23, Cys26, Cys28, Cys31, Cys34, Cys38, Cys40, Cys46, Cys50, Cys54, Cys56, and Cys57. Residues 30–58 (PCEKCSSGCKCTTKEDCCKTCTKPCSCCP) form an alpha region.

The protein belongs to the metallothionein superfamily. Type 3 family.

In terms of biological role, metallothioneins have a high content of cysteine residues that bind various heavy metals. Class I MTS in marine crustacea are involved in the sequestration of elevated levels of heavy-metal ions. The chain is Metallothionein from Carcinus maenas (Common shore crab).